Consider the following 568-residue polypeptide: NADPH oxidase 3 (568 aa).

The Cytoplasmic segment spans residues 1–12 (MPTCWILNESVS). The helical transmembrane segment at 13–33 (FVVALLWLAINIYLFIDTFCW) threads the bilayer. At 34-49 (YAEEESFFYTRVILGS) the chain is on the extracellular side. Residues 50 to 70 (ALAWARASAVCLNFNCMLILL) form a helical membrane-spanning segment. In terms of domain architecture, Ferric oxidoreductase spans 55–284 (RASAVCLNFN…VVLYACEIII (230 aa)). Over 71-103 (PVSRNFVSLVRGTSVCCRGPWRRQLDKNLKFHK) the chain is Cytoplasmic. The chain crosses the membrane as a helical span at residues 104 to 124 (LVAYGIAVNSVIHIVAHLFNL). The Extracellular portion of the chain corresponds to 125-167 (ERYHLGQAKDAEGLLAALSKLGNAPNESYLNPVRTLYTGTTTQ). A helical membrane pass occupies residues 168–188 (LLMTVSGITGLVISLALILIM). The Cytoplasmic portion of the chain corresponds to 189 to 201 (TSSTEFIRQSSYE). The helical transmembrane segment at 202 to 222 (LFWYTHHIFIFLFISLAIHGG) threads the bilayer. Topologically, residues 223–395 (GRIIRGQTPE…DGPFGGSLAD (173 aa)) are extracellular. N-linked (GlcNAc...) asparagine glycosylation occurs at asparagine 238. In terms of domain architecture, FAD-binding FR-type spans 285-395 (RFWRSHQEVV…DGPFGGSLAD (111 aa)). A helical membrane pass occupies residues 396 to 416 (VFHYPVSVCIATGIGVTPFAS). Residues 417–568 (LLKSVWYKCC…VHFYYNKENF (152 aa)) lie on the Cytoplasmic side of the membrane.

In terms of assembly, forms a heterodimer with CYBA/p22phox which is essential for its activity and cell membrane localization. Requires heme as cofactor. In terms of processing, N-glycosylated in a CYBA/p22phox-dependent manner. Expressed in the inner ear by the spiral glanglia and the organ of Corti.

The protein localises to the cell membrane. The catalysed reaction is NADPH + 2 O2 = 2 superoxide + NADP(+) + H(+). Its activity is regulated as follows. Activated by the ototoxic drug cisplatin. Activated by NOXO1. Cooperatively activated by NCF1 and NCF2 or NOXA1 in a phorbol 12-myristate 13-acetate (PMA)-dependent manner. Inhibited by diphenyleneiodonium chloride. Functionally, NADPH oxidase that catalyzes the generation of superoxide from molecular oxygen utilizing NADPH as an electron donor, upon formation of a complex with CYBA/p22phox. Plays a role in the biogenesis of otoconia/otolith, which are crystalline structures of the inner ear involved in the perception of gravity. This chain is NADPH oxidase 3 (Nox3), found in Rattus norvegicus (Rat).